Consider the following 366-residue polypeptide: GTP cyclohydrolase 1 type 2 homolog (366 aa).

H64, H65, D102, H326, and E329 together coordinate Zn(2+).

This sequence belongs to the GTP cyclohydrolase I type 2/NIF3 family. As to quaternary structure, toroid-shaped homohexamer that has a central cavity of about 38 Angstroms diameter.

In Staphylococcus aureus (strain Mu50 / ATCC 700699), this protein is GTP cyclohydrolase 1 type 2 homolog.